The primary structure comprises 96 residues: MIVSRLTFPLQAAKLVARKAAGNPSNSIIQRRHMSGVYFRSGALRPKPDEMPFGLFAIFCAVIPGLFIGATISKNVANFLEENDLFVPSDDDDDED.

A mitochondrion-targeting transit peptide spans 1 to 34 (MIVSRLTFPLQAAKLVARKAAGNPSNSIIQRRHM). The helical transmembrane segment at 52 to 72 (PFGLFAIFCAVIPGLFIGATI) threads the bilayer.

Belongs to the SMDT1/EMRE family.

It is found in the mitochondrion inner membrane. In terms of biological role, essential regulatory subunit of the mitochondrial calcium uniporter (mcu) channel, a protein that mediates calcium uptake into mitochondria. This Drosophila pseudoobscura pseudoobscura (Fruit fly) protein is Essential MCU regulator, mitochondrial.